Reading from the N-terminus, the 311-residue chain is Urease accessory protein UreD 3 (311 aa).

The protein belongs to the UreD family. UreD, UreF and UreG form a complex that acts as a GTP-hydrolysis-dependent molecular chaperone, activating the urease apoprotein by helping to assemble the nickel containing metallocenter of UreC. The UreE protein probably delivers the nickel.

The protein localises to the cytoplasm. In terms of biological role, required for maturation of urease via the functional incorporation of the urease nickel metallocenter. The chain is Urease accessory protein UreD 3 from Methylorubrum populi (strain ATCC BAA-705 / NCIMB 13946 / BJ001) (Methylobacterium populi).